Reading from the N-terminus, the 341-residue chain is Biotin synthase (341 aa).

The 230-residue stretch at 56 to 285 (ADIQRAALLS…KARVRLSAGR (230 aa)) folds into the Radical SAM core domain. Residues cysteine 71, cysteine 75, and cysteine 78 each contribute to the [4Fe-4S] cluster site. Positions 116, 148, 208, and 280 each coordinate [2Fe-2S] cluster.

It belongs to the radical SAM superfamily. Biotin synthase family. As to quaternary structure, homodimer. It depends on [4Fe-4S] cluster as a cofactor. [2Fe-2S] cluster is required as a cofactor.

It catalyses the reaction (4R,5S)-dethiobiotin + (sulfur carrier)-SH + 2 reduced [2Fe-2S]-[ferredoxin] + 2 S-adenosyl-L-methionine = (sulfur carrier)-H + biotin + 2 5'-deoxyadenosine + 2 L-methionine + 2 oxidized [2Fe-2S]-[ferredoxin]. Its pathway is cofactor biosynthesis; biotin biosynthesis; biotin from 7,8-diaminononanoate: step 2/2. Its function is as follows. Catalyzes the conversion of dethiobiotin (DTB) to biotin by the insertion of a sulfur atom into dethiobiotin via a radical-based mechanism. In Methylorubrum populi (strain ATCC BAA-705 / NCIMB 13946 / BJ001) (Methylobacterium populi), this protein is Biotin synthase.